A 359-amino-acid polypeptide reads, in one-letter code: CMP-N-acetylneuraminate-poly-alpha-2,8-sialyltransferase (359 aa).

Topologically, residues 1 to 7 (MRSIRKR) are cytoplasmic. A helical; Signal-anchor for type II membrane protein transmembrane segment spans residues 8 to 20 (WTICTISLLLIFY). At 21 to 359 (KTKEIARTEE…KLTTGKCVKQ (339 aa)) the chain is on the lumenal side. N-linked (GlcNAc...) asparagine glycans are attached at residues asparagine 50, asparagine 74, and asparagine 119. 2 cysteine pairs are disulfide-bonded: cysteine 142–cysteine 292 and cysteine 156–cysteine 356. Positions 147 and 170 each coordinate CMP-N-acetyl-beta-neuraminate. N-linked (GlcNAc...) asparagine glycans are attached at residues asparagine 204 and asparagine 219. Positions 279, 280, 281, and 301 each coordinate CMP-N-acetyl-beta-neuraminate. Catalysis depends on histidine 331, which acts as the Proton donor/acceptor.

Belongs to the glycosyltransferase 29 family. Autopolysialylated.

It is found in the golgi apparatus membrane. It localises to the secreted. It carries out the reaction [N-acetyl-alpha-D-neuraminosyl-(2-&gt;8)](n) + CMP-N-acetyl-beta-neuraminate = [N-acetyl-alpha-D-neuraminosyl-(2-&gt;8)](n+1) + CMP + H(+). In terms of biological role, catalyzes the transfer of a sialic acid from a CMP-linked sialic acid donor onto a terminal alpha-2,3-, alpha-2,6-, or alpha-2,8-linked sialic acid of an N-linked glycan protein acceptor through alpha-2,8-linkages. Therefore, participates in polysialic acid synthesis on various sialylated N-acetyllactosaminyl oligosaccharides, including NCAM1 N-glycans, FETUB N-glycans and AHSG. It is noteworthy that alpha-2,3-linked sialic acid is apparently a better acceptor than alpha-2,6-linked sialic acid. The sequence is that of CMP-N-acetylneuraminate-poly-alpha-2,8-sialyltransferase (ST8SIA4) from Pan troglodytes (Chimpanzee).